Here is an 867-residue protein sequence, read N- to C-terminus: Protein melted homolog (867 aa).

Residues 480–505 are disordered; sequence MPSSSRTNVHLSQAASSSRGHSLPQT. Positions 753–860 constitute a PH domain; it reads EKVLEGQLKE…WLHCLQIAMA (108 aa).

This sequence belongs to the MELT/VEPH family.

The protein localises to the cell membrane. The sequence is that of Protein melted homolog from Caenorhabditis briggsae.